Here is a 582-residue protein sequence, read N- to C-terminus: ATP-dependent lipid A-core flippase (582 aa).

5 helical membrane passes run 16 to 36 (LWPT…ALIL), 63 to 83 (VLVW…ITSY), 153 to 173 (IIGL…ILIV), 253 to 273 (PIIQ…ASFP), and 275 to 295 (VMDN…IALM). Positions 28–310 (IVAGVALILN…LTNVNAQFQR (283 aa)) constitute an ABC transmembrane type-1 domain. The 237-residue stretch at 342 to 578 (VEFRNVTFTY…RGVYAQLHKM (237 aa)) folds into the ABC transporter domain. 376 to 383 (GRSGSGKS) contacts ATP.

Belongs to the ABC transporter superfamily. Lipid exporter (TC 3.A.1.106) family. In terms of assembly, homodimer.

The protein resides in the cell inner membrane. The enzyme catalyses ATP + H2O + lipid A-core oligosaccharideSide 1 = ADP + phosphate + lipid A-core oligosaccharideSide 2.. Involved in lipopolysaccharide (LPS) biosynthesis. Translocates lipid A-core from the inner to the outer leaflet of the inner membrane. Transmembrane domains (TMD) form a pore in the inner membrane and the ATP-binding domain (NBD) is responsible for energy generation. The sequence is that of ATP-dependent lipid A-core flippase from Shigella sonnei (strain Ss046).